The sequence spans 182 residues: Dynactin subunit 5 (182 aa).

N-acetylmethionine is present on M1.

It belongs to the dynactin subunits 5/6 family. Dynactin subunit 5 subfamily. As to quaternary structure, subunit of dynactin, a multiprotein complex part of a tripartite complex with dynein and a adapter, such as BICDL1, BICD2 or HOOK3. The dynactin complex is built around ACTR1A/ACTB filament and consists of an actin-related filament composed of a shoulder domain, a pointed end and a barbed end. Its length is defined by its flexible shoulder domain. The soulder is composed of 2 DCTN1 subunits, 4 DCTN2 and 2 DCTN3. The 4 DCNT2 (via N-terminus) bind the ACTR1A filament and act as molecular rulers to determine the length. The pointed end is important for binding dynein-dynactin cargo adapters. Consists of 4 subunits: ACTR10, DCNT4, DCTN5 and DCTN6. Within the complex DCTN6 forms a heterodimer with DCTN5. The barbed end is composed of a CAPZA1:CAPZB heterodimers, which binds ACTR1A/ACTB filament and dynactin and stabilizes dynactin. Interacts with N4BP2L1.

It localises to the cytoplasm. The protein localises to the cytoskeleton. The protein resides in the chromosome. Its subcellular location is the centromere. It is found in the kinetochore. Functionally, part of the dynactin complex that activates the molecular motor dynein for ultra-processive transport along microtubules. This Pongo abelii (Sumatran orangutan) protein is Dynactin subunit 5 (DCTN5).